The sequence spans 417 residues: GTP-binding protein YPT11 (417 aa).

Residues 1-34 are disordered; that stretch reads MSQRKRYSLNVVTSPSIPSPTPSAPIRTNESNWE. GTP is bound by residues 97–104, 228–232, and 292–295; these read GDANVGKT, DTAGQ, and NKID. 2 S-geranylgeranyl cysteine lipidation sites follow: Cys-415 and Cys-416.

The protein belongs to the small GTPase superfamily. Rab family. As to quaternary structure, interacts with MYO2 (via C-terminal tail domain). Interacts with YIF1, YIP3, YIP4 and YIP5.

The protein localises to the endoplasmic reticulum membrane. It localises to the bud tip. The protein resides in the bud neck. In terms of biological role, involved in the positive control of both endoplasmic reticulum (ER) and mitochondrion inheritance during cell divison. Required for the MYO2-dependent retention of newly inherited mitochondria at the bud tip in developing daughter cells. This Saccharomyces cerevisiae (strain AWRI1631) (Baker's yeast) protein is GTP-binding protein YPT11 (YPT11).